Here is a 393-residue protein sequence, read N- to C-terminus: Nucleosome assembly protein 1-like 1 (393 aa).

Positions 1–10 (MANIDNKEQT) are enriched in basic and acidic residues. 2 disordered regions span residues 1 to 36 (MANIDNKEQTELDQQDMEDVEDIEEEEAGEDANSKA) and 132 to 165 (ECEWKVDEEEDISGDLKDKAKLEEEKKDEEKEDP). Composition is skewed to acidic residues over residues 11-30 (ELDQQDMEDVEDIEEEEAGE) and 132-144 (ECEWKVDEEEDIS). The NAP1L motif signature appears at 126–151 (YEPTEEECEWKVDEEEDISGDLKDKA). Residues 145–165 (GDLKDKAKLEEEKKDEEKEDP) show a composition bias toward basic and acidic residues. The Nuclear localization signal motif lies at 274 to 280 (IKKKQKH). A compositionally biased stretch (acidic residues) spans 347-378 (AIEDDDDDYDEEGEEADDEEGEEEADEDNDPD). Residues 347-393 (AIEDDDDDYDEEGEEADDEEGEEEADEDNDPDYEPKKDQNPAECKQQ) form a disordered region. Residues 379–393 (YEPKKDQNPAECKQQ) are compositionally biased toward basic and acidic residues.

This sequence belongs to the nucleosome assembly protein (NAP) family. Forms homomultimers. Interacts with histone B4. Interacts with the B-type cyclins ccnb1 and ccnb2. Post-translationally, phosphorylated by cyclin B-cdc2 kinase complexes.

It is found in the cytoplasm. Its subcellular location is the nucleus. Its function is as follows. Acts as a chaperone for the linker histone to facilitate deposition of histone B4 onto linker DNA. Required for both remodeling of sperm chromatin into nucleosomes, and linker histone binding to nucleosome core dimers. Plays a role in tissue-specific gene regulation. Required for primitive hemopoiesis, acting upstream of tal1/scl. This Xenopus tropicalis (Western clawed frog) protein is Nucleosome assembly protein 1-like 1.